The chain runs to 338 residues: Ketol-acid reductoisomerase (NADP(+)) (338 aa).

The region spanning 1–181 (MKVYYDKDAD…GGGRTGIIET (181 aa)) is the KARI N-terminal Rossmann domain. Residues 24–27 (YGSQ), Arg47, Ser50, Ser52, and 82–85 (DEFQ) each bind NADP(+). The active site involves His107. Gly133 provides a ligand contact to NADP(+). The region spanning 182–327 (TFKDETETDL…AKLRSMMPWI (146 aa)) is the KARI C-terminal knotted domain. The Mg(2+) site is built by Asp190, Glu194, Glu226, and Glu230. Ser251 contributes to the substrate binding site.

The protein belongs to the ketol-acid reductoisomerase family. Requires Mg(2+) as cofactor.

It catalyses the reaction (2R)-2,3-dihydroxy-3-methylbutanoate + NADP(+) = (2S)-2-acetolactate + NADPH + H(+). It carries out the reaction (2R,3R)-2,3-dihydroxy-3-methylpentanoate + NADP(+) = (S)-2-ethyl-2-hydroxy-3-oxobutanoate + NADPH + H(+). It functions in the pathway amino-acid biosynthesis; L-isoleucine biosynthesis; L-isoleucine from 2-oxobutanoate: step 2/4. The protein operates within amino-acid biosynthesis; L-valine biosynthesis; L-valine from pyruvate: step 2/4. In terms of biological role, involved in the biosynthesis of branched-chain amino acids (BCAA). Catalyzes an alkyl-migration followed by a ketol-acid reduction of (S)-2-acetolactate (S2AL) to yield (R)-2,3-dihydroxy-isovalerate. In the isomerase reaction, S2AL is rearranged via a Mg-dependent methyl migration to produce 3-hydroxy-3-methyl-2-ketobutyrate (HMKB). In the reductase reaction, this 2-ketoacid undergoes a metal-dependent reduction by NADPH to yield (R)-2,3-dihydroxy-isovalerate. This chain is Ketol-acid reductoisomerase (NADP(+)), found in Thiobacillus denitrificans (strain ATCC 25259 / T1).